Consider the following 55-residue polypeptide: Large ribosomal subunit protein bL33 (55 aa).

Residues 1–11 are compositionally biased toward basic and acidic residues; it reads MAKGGREKIKL. The interval 1 to 29 is disordered; the sequence is MAKGGREKIKLESSAGTGHFYTTSKNKRT. Residues 14 to 24 show a composition bias toward polar residues; that stretch reads SAGTGHFYTTS.

Belongs to the bacterial ribosomal protein bL33 family.

This is Large ribosomal subunit protein bL33 from Polynucleobacter asymbioticus (strain DSM 18221 / CIP 109841 / QLW-P1DMWA-1) (Polynucleobacter necessarius subsp. asymbioticus).